Consider the following 65-residue polypeptide: Large ribosomal subunit protein bL35 (65 aa).

The disordered stretch occupies residues 1–46; it reads MPKIKTNRGAAKRFKPTGSGGFKRAQSHRRHILTKKSTKRKRHLRS. Basic residues predominate over residues 25–45; the sequence is AQSHRRHILTKKSTKRKRHLR.

It belongs to the bacterial ribosomal protein bL35 family.

The sequence is that of Large ribosomal subunit protein bL35 from Thioalkalivibrio sulfidiphilus (strain HL-EbGR7).